Here is a 734-residue protein sequence, read N- to C-terminus: MKKMNLVTAALPYVNNIPHLGNLVQVLSADAFARYSKMSGIKTLYVCGTDEYGTATETKALIENTTPLELCNKYYEIHKSIYKWFNIEFDIFGRTTNKNHQDIVQNFFLQLEKNGYIKERETEQFFCNKDSMFLADRYVIGECPECQSMAKGDQCDNCSKLLNPTDLINPKCIICKNKPILKKTNHLYLDLPKIKTKLEKWIKNPDTSKNWNTNALKMTKAFLRDGLKERAITRDLKWGIPVPKKGFENKVFYVWFDAPIGYISITKNIIKNWESWWKNNDQVNLVQFIGKDNILFHTIIFPCIEIGSEENWTILNQLSSSEYLNYENLKFSKSEGTGIFGNDAITTGIPSDIWRFYIYYNRPEKSDFQFMWQDLMERVNTELIDNFSNLVNRVLTFQRKFFGDVIETIEIQNKFWKQITPKYNKILNLFKKTELKSALKEILKISSLGNKIFQDNEPWKRKNNSPQETKELISNLIYLIRDLSILMMPFIPETSKKIQQFFGNSYQFSTKILGTKSGIKKIEFTEILFNKLEQKKINNLKLKYSGDKNMKENEQAENLPIAKEQPENLFREKVLLRVVKINKIERNPEAKNLFILKLDDGTNKDKQIVSGLEGYYTEEELLGKHIIIVDNLKPAKFRGIKSEGMLIAAEDKNKNFKVIIVEDSIQNPIAGERIILENDQNKDLACPPKIDINKFLKANIVAENGELKINGINLILENSKNKILSKDIPNGTVC.

The short motif at 12–22 (PYVNNIPHLGN) is the 'HIGH' region element. Zn(2+) contacts are provided by Cys-143, Cys-146, Cys-155, and Cys-158. A 'KMSKS' region motif is present at residues 330–334 (KFSKS). Residue Lys-333 participates in ATP binding. The 106-residue stretch at 570–675 (FREKVLLRVV…QNPIAGERII (106 aa)) folds into the tRNA-binding domain.

It belongs to the class-I aminoacyl-tRNA synthetase family. MetG type 1 subfamily. In terms of assembly, homodimer. It depends on Zn(2+) as a cofactor.

It localises to the cytoplasm. It catalyses the reaction tRNA(Met) + L-methionine + ATP = L-methionyl-tRNA(Met) + AMP + diphosphate. Is required not only for elongation of protein synthesis but also for the initiation of all mRNA translation through initiator tRNA(fMet) aminoacylation. The sequence is that of Methionine--tRNA ligase from Borreliella burgdorferi (strain ZS7) (Borrelia burgdorferi).